The chain runs to 463 residues: MADYDLTQKLIPHLDRHLAIPLLNHLSDIAIYPAEQLARAQYDLAKGTNMVNYVEQFHAQIENAEPTDFARLRDEATAKYQELQEKAQPVTKVIEDPDAVAKLRSGGDKDRNLDLLRSEYQIDIDQINALYHFGQYQYSLGDYGSAGNLLYHFLILSPSYELNISAQWGKLASNILNGEWDAALMQVRDLRETIDNPHGTSLAKPLAQLQARTWLLHWSLFVFFNLGENQGCQGLLDMFLSPAYLNTIQTSCPHLLRYLVAAAIISRRAPKPANVRSRDHVKELTRIVETEEYQYTDPITSFLKDVFADFDLTQAQQRLSVAESVVRSDFFLSGFADEFVENARWLISEVICRLHRRIDIGQLSKTLNLSNEEGEKWIVNLIRDSRMGVEAKIDLKENMLHITRPHATPTATLIETTRGLAFRSQAIQFAMQSSVGEPRERGERGERGNKGGRGRPRTQEVAA.

The region spanning 224 to 407 is the PCI domain; sequence FNLGENQGCQ…NMLHITRPHA (184 aa). The disordered stretch occupies residues 432–463; it reads QSSVGEPRERGERGERGNKGGRGRPRTQEVAA. A compositionally biased stretch (basic and acidic residues) spans 437–449; that stretch reads EPRERGERGERGN.

The protein belongs to the eIF-3 subunit E family. Component of the eukaryotic translation initiation factor 3 (eIF-3) complex.

Its subcellular location is the cytoplasm. In terms of biological role, component of the eukaryotic translation initiation factor 3 (eIF-3) complex, which is involved in protein synthesis of a specialized repertoire of mRNAs and, together with other initiation factors, stimulates binding of mRNA and methionyl-tRNAi to the 40S ribosome. The eIF-3 complex specifically targets and initiates translation of a subset of mRNAs involved in cell proliferation. This chain is Eukaryotic translation initiation factor 3 subunit E, found in Cryptococcus neoformans var. neoformans serotype D (strain JEC21 / ATCC MYA-565) (Filobasidiella neoformans).